Here is a 354-residue protein sequence, read N- to C-terminus: Dihydroorotate dehydrogenase (quinone) (354 aa).

Residues 67–71 (AGFDK) and Thr91 each bind FMN. Residue Lys71 coordinates substrate. 116-120 (NRMGF) lines the substrate pocket. 2 residues coordinate FMN: Asn144 and Asn177. Asn177 contributes to the substrate binding site. Ser180 serves as the catalytic Nucleophile. Asn182 provides a ligand contact to substrate. FMN contacts are provided by Lys213 and Thr241. Substrate is bound at residue 242–243 (NT). FMN is bound by residues Gly265, Gly294, and 315–316 (YT).

Belongs to the dihydroorotate dehydrogenase family. Type 2 subfamily. Monomer. Requires FMN as cofactor.

It is found in the cell membrane. The enzyme catalyses (S)-dihydroorotate + a quinone = orotate + a quinol. The protein operates within pyrimidine metabolism; UMP biosynthesis via de novo pathway; orotate from (S)-dihydroorotate (quinone route): step 1/1. Functionally, catalyzes the conversion of dihydroorotate to orotate with quinone as electron acceptor. The chain is Dihydroorotate dehydrogenase (quinone) from Mycolicibacterium smegmatis (strain ATCC 700084 / mc(2)155) (Mycobacterium smegmatis).